The chain runs to 159 residues: LOB domain-containing protein 25 (159 aa).

The LOB domain maps to 38–139 (SPCAACKFLR…RELEETNADL (102 aa)).

It belongs to the LOB domain-containing protein family. In terms of tissue distribution, expressed in young shoots, roots, stems, leaves and flowers.

This Arabidopsis thaliana (Mouse-ear cress) protein is LOB domain-containing protein 25 (LBD25).